Reading from the N-terminus, the 176-residue chain is Adenine phosphoribosyltransferase (176 aa).

This sequence belongs to the purine/pyrimidine phosphoribosyltransferase family. As to quaternary structure, homodimer.

The protein resides in the cytoplasm. It carries out the reaction AMP + diphosphate = 5-phospho-alpha-D-ribose 1-diphosphate + adenine. Its pathway is purine metabolism; AMP biosynthesis via salvage pathway; AMP from adenine: step 1/1. Catalyzes a salvage reaction resulting in the formation of AMP, that is energically less costly than de novo synthesis. This chain is Adenine phosphoribosyltransferase, found in Borreliella burgdorferi (strain ZS7) (Borrelia burgdorferi).